The sequence spans 402 residues: Probable 2,3-bisphosphoglycerate-independent phosphoglycerate mutase (402 aa).

This sequence belongs to the BPG-independent phosphoglycerate mutase family. A-PGAM subfamily.

It carries out the reaction (2R)-2-phosphoglycerate = (2R)-3-phosphoglycerate. It participates in carbohydrate degradation; glycolysis; pyruvate from D-glyceraldehyde 3-phosphate: step 3/5. Catalyzes the interconversion of 2-phosphoglycerate and 3-phosphoglycerate. The chain is Probable 2,3-bisphosphoglycerate-independent phosphoglycerate mutase from Thermosipho africanus (strain TCF52B).